The sequence spans 412 residues: Proline-rich protein 30 (412 aa).

The span at 33 to 45 (HNLQPLSAHQSLR) shows a compositional bias: polar residues. 3 disordered regions span residues 33 to 75 (HNLQ…QFGS), 123 to 174 (PLTP…SNRQ), and 318 to 412 (PKEV…KSSV). Composition is skewed to low complexity over residues 126–142 (PSFSPSQPQNSSLPHSP) and 334–350 (PSPAFQPPAAQARADPA). Residues 353–372 (TPSQTRSFRSAGLQSPNSPR) show a composition bias toward polar residues.

This chain is Proline-rich protein 30 (PRR30), found in Macaca fascicularis (Crab-eating macaque).